The chain runs to 511 residues: Thioredoxin reductase 2, mitochondrial (511 aa).

A mitochondrion-targeting transit peptide spans 1–21; sequence MAALRGAAARFRGRAPGGARG. FAD is bound at residue 29 to 58; the sequence is DLLVIGGGSGGLACAKEAAQLGKKVAVLDY. A disulfide bridge links Cys-74 with Cys-79. Lys-316 is subject to N6-succinyllysine. The Proton acceptor role is filled by His-484. The segment at residues 509–510 is a cross-link (cysteinyl-selenocysteine (Cys-Sec)); the sequence is CU. Position 510 (Sec-510) is a non-standard amino acid, selenocysteine.

It belongs to the class-I pyridine nucleotide-disulfide oxidoreductase family. Homodimer. FAD is required as a cofactor.

The protein localises to the mitochondrion. It catalyses the reaction [thioredoxin]-dithiol + NADP(+) = [thioredoxin]-disulfide + NADPH + H(+). Inhibited by 1-chloro-2,4-dinitrobenzene and by zinc, calcium, magnesium and Fe(2+) ions. Its function is as follows. Involved in the control of reactive oxygen species levels and the regulation of mitochondrial redox homeostasis. Maintains thioredoxin in a reduced state. May play a role in redox-regulated cell signaling. The protein is Thioredoxin reductase 2, mitochondrial (TXNRD2) of Bos taurus (Bovine).